The chain runs to 399 residues: Dual-specificity RNA methyltransferase RlmN (399 aa).

Glutamate 122 (proton acceptor) is an active-site residue. In terms of domain architecture, Radical SAM core spans 128–371; sequence ETDRGTLCVS…VRTPRGRDIL (244 aa). Cysteine 135 and cysteine 374 are joined by a disulfide. Positions 142, 146, and 149 each coordinate [4Fe-4S] cluster. Residues 200 to 201, serine 232, 254 to 256, and asparagine 331 each bind S-adenosyl-L-methionine; these read GE and SLH. The active-site S-methylcysteine intermediate is cysteine 374.

This sequence belongs to the radical SAM superfamily. RlmN family. It depends on [4Fe-4S] cluster as a cofactor.

The protein localises to the cytoplasm. The catalysed reaction is adenosine(2503) in 23S rRNA + 2 reduced [2Fe-2S]-[ferredoxin] + 2 S-adenosyl-L-methionine = 2-methyladenosine(2503) in 23S rRNA + 5'-deoxyadenosine + L-methionine + 2 oxidized [2Fe-2S]-[ferredoxin] + S-adenosyl-L-homocysteine. It catalyses the reaction adenosine(37) in tRNA + 2 reduced [2Fe-2S]-[ferredoxin] + 2 S-adenosyl-L-methionine = 2-methyladenosine(37) in tRNA + 5'-deoxyadenosine + L-methionine + 2 oxidized [2Fe-2S]-[ferredoxin] + S-adenosyl-L-homocysteine. Its function is as follows. Specifically methylates position 2 of adenine 2503 in 23S rRNA and position 2 of adenine 37 in tRNAs. m2A2503 modification seems to play a crucial role in the proofreading step occurring at the peptidyl transferase center and thus would serve to optimize ribosomal fidelity. This is Dual-specificity RNA methyltransferase RlmN from Rhodopseudomonas palustris (strain BisB18).